The chain runs to 324 residues: tRNA pseudouridine synthase B (324 aa).

The active-site Nucleophile is D49. The interval 87–107 is disordered; that stretch reads RSTDDLEGQPTKTSDKRPSRE.

The protein belongs to the pseudouridine synthase TruB family. Type 1 subfamily.

It carries out the reaction uridine(55) in tRNA = pseudouridine(55) in tRNA. In terms of biological role, responsible for synthesis of pseudouridine from uracil-55 in the psi GC loop of transfer RNAs. This chain is tRNA pseudouridine synthase B, found in Brucella abortus (strain 2308).